A 171-amino-acid chain; its full sequence is Peptide methionine sulfoxide reductase MsrA (171 aa).

Cys12 is an active-site residue.

It belongs to the MsrA Met sulfoxide reductase family.

The enzyme catalyses L-methionyl-[protein] + [thioredoxin]-disulfide + H2O = L-methionyl-(S)-S-oxide-[protein] + [thioredoxin]-dithiol. It catalyses the reaction [thioredoxin]-disulfide + L-methionine + H2O = L-methionine (S)-S-oxide + [thioredoxin]-dithiol. In terms of biological role, has an important function as a repair enzyme for proteins that have been inactivated by oxidation. Catalyzes the reversible oxidation-reduction of methionine sulfoxide in proteins to methionine. In Leuconostoc mesenteroides subsp. mesenteroides (strain ATCC 8293 / DSM 20343 / BCRC 11652 / CCM 1803 / JCM 6124 / NCDO 523 / NBRC 100496 / NCIMB 8023 / NCTC 12954 / NRRL B-1118 / 37Y), this protein is Peptide methionine sulfoxide reductase MsrA.